Here is a 432-residue protein sequence, read N- to C-terminus: Protein RETICULATA, chloroplastic (432 aa).

The transit peptide at Met-1–Arg-47 directs the protein to the chloroplast. Residues Gly-109–Tyr-140 are disordered. Gly residues predominate over residues Val-111–Glu-132. 2 helical membrane-spanning segments follow: residues Leu-249 to Ala-269 and Ile-322 to Ile-342.

This sequence belongs to the RETICULATA family. In terms of tissue distribution, highly expressed in the vasculature of developing leaf primordia, margins of fully expanded leaves, hydathodes of rosette of cauline leaves, basal region of the lamina, stipules, root tips, stamens and in the abscission zone of the funiculus.

It localises to the plastid. The protein resides in the chloroplast membrane. Its function is as follows. May play a role in leaf development. Required for leaf mesophyll cell division in the early stages of leaf organogenesis. Acts in a developmental pathway that involves PPT1/CUE1 but does not include ASE2/DOV1. This is Protein RETICULATA, chloroplastic from Arabidopsis thaliana (Mouse-ear cress).